Here is a 187-residue protein sequence, read N- to C-terminus: Peptide deformylase (187 aa).

Positions 94 and 136 each coordinate Fe cation. E137 is an active-site residue. H140 lines the Fe cation pocket.

This sequence belongs to the polypeptide deformylase family. Fe(2+) serves as cofactor.

It carries out the reaction N-terminal N-formyl-L-methionyl-[peptide] + H2O = N-terminal L-methionyl-[peptide] + formate. Its function is as follows. Removes the formyl group from the N-terminal Met of newly synthesized proteins. Requires at least a dipeptide for an efficient rate of reaction. N-terminal L-methionine is a prerequisite for activity but the enzyme has broad specificity at other positions. The protein is Peptide deformylase of Chlorobaculum parvum (strain DSM 263 / NCIMB 8327) (Chlorobium vibrioforme subsp. thiosulfatophilum).